Consider the following 291-residue polypeptide: uncharacterized protein (291 aa).

The protein belongs to the pseudouridine synthase RluA family.

The catalysed reaction is a uridine in RNA = a pseudouridine in RNA. This is an uncharacterized protein from Synechocystis sp. (strain ATCC 27184 / PCC 6803 / Kazusa).